We begin with the raw amino-acid sequence, 479 residues long: MMNLGNRVKSVIKLTSTTGLTGKDFQATKVATFSTAQVQQAQENVRSYGGLKDKDRIFTNLYGEHDVYLKGAIARGDWYKTKNIIDKGKDWILKEMMASGLRGRGGAGFPSGLKWSFMPKTTSKDRPQYLVINADEGEPGTCKDREIMRHDPHKLIEGCLLAGFAMRACAAYIYIRGEFHYEAKVLEQAIDEAYKAGLIGENACGTGYKFDVYVHRGAGAYICGEETALIESIEGKQGKPRLKPPFPAMAGLYGCPTTVTNVETVAVAPTILRRGGAWFASFGRPKNAGTKLFCISGHVNNPCTVEEEMSIPLRELIDKHCGGVIGGWDNLKGVIPGGSSVPVLPKNICDNVLMDFDDLRQHRSGLGTAAVIVMNKETDMIAAIARLSKFYKHESCGQCTPCREGVGWLYDITDRLVTGNAKPDEIDSLEEISRQIEGHTICALGDAAAWPVQGLIRHFRPEIEDRIKQFQLNKKQSPF.

103–112 (GRGGAGFPSG) contributes to the NADH binding site. Residue 216–264 (RGAGAYICGEETALIESIEGKQGKPRLKPPFPAMAGLYGCPTTVTNVET) participates in FMN binding. [4Fe-4S] cluster contacts are provided by Cys396, Cys399, Cys402, and Cys442.

The protein belongs to the complex I 51 kDa subunit family. Complex I is composed of about 45 different subunits. This is a component of the flavoprotein-sulfur (FP) fragment of the enzyme. The cofactor is FMN. [4Fe-4S] cluster is required as a cofactor.

The protein localises to the mitochondrion inner membrane. It catalyses the reaction a ubiquinone + NADH + 5 H(+)(in) = a ubiquinol + NAD(+) + 4 H(+)(out). Its function is as follows. Core subunit of the mitochondrial membrane respiratory chain NADH dehydrogenase (Complex I) that is believed to belong to the minimal assembly required for catalysis. Complex I functions in the transfer of electrons from NADH to the respiratory chain. The immediate electron acceptor for the enzyme is believed to be ubiquinone. The sequence is that of NADH dehydrogenase [ubiquinone] flavoprotein 1, mitochondrial (ndufv1) from Dictyostelium discoideum (Social amoeba).